We begin with the raw amino-acid sequence, 112 residues long: Putative pterin-4-alpha-carbinolamine dehydratase (112 aa).

This sequence belongs to the pterin-4-alpha-carbinolamine dehydratase family.

It catalyses the reaction (4aS,6R)-4a-hydroxy-L-erythro-5,6,7,8-tetrahydrobiopterin = (6R)-L-erythro-6,7-dihydrobiopterin + H2O. The protein is Putative pterin-4-alpha-carbinolamine dehydratase of Shewanella woodyi (strain ATCC 51908 / MS32).